Here is a 93-residue protein sequence, read N- to C-terminus: uncharacterized protein (93 aa).

This is an uncharacterized protein from Methanocaldococcus jannaschii (strain ATCC 43067 / DSM 2661 / JAL-1 / JCM 10045 / NBRC 100440) (Methanococcus jannaschii).